The following is a 159-amino-acid chain: Transcriptional repressor NrdR (159 aa).

The disordered stretch occupies residues 1–21 (MRCPKCQHNKSNVIDSRQAED). The segment at 3–34 (CPKCQHNKSNVIDSRQAEDGNTIRRRRECDAC) is a zinc-finger region. Positions 49–139 (LLVVKKDGTR…VYRSFKDVDE (91 aa)) constitute an ATP-cone domain.

This sequence belongs to the NrdR family. Requires Zn(2+) as cofactor.

Functionally, negatively regulates transcription of bacterial ribonucleotide reductase nrd genes and operons by binding to NrdR-boxes. The protein is Transcriptional repressor NrdR of Streptococcus thermophilus (strain CNRZ 1066).